A 307-amino-acid polypeptide reads, in one-letter code: Malonyl-[acyl-carrier protein] O-methyltransferase (307 aa).

It belongs to the methyltransferase superfamily.

It carries out the reaction malonyl-[ACP] + S-adenosyl-L-methionine = malonyl-[ACP] methyl ester + S-adenosyl-L-homocysteine. It functions in the pathway cofactor biosynthesis; biotin biosynthesis. Its function is as follows. Converts the free carboxyl group of a malonyl-thioester to its methyl ester by transfer of a methyl group from S-adenosyl-L-methionine (SAM). It allows to synthesize pimeloyl-ACP via the fatty acid synthetic pathway. In Nitrosospira multiformis (strain ATCC 25196 / NCIMB 11849 / C 71), this protein is Malonyl-[acyl-carrier protein] O-methyltransferase.